The chain runs to 567 residues: Cytochrome P450 monooxygenase 79 (567 aa).

A helical membrane pass occupies residues 7–24 (ELAILAIVLLVTAVVFYT). N-linked (GlcNAc...) asparagine glycans are attached at residues N223 and N279. C475 lines the heme pocket.

It belongs to the cytochrome P450 family. It depends on heme as a cofactor.

It is found in the membrane. It functions in the pathway secondary metabolite biosynthesis. In terms of biological role, cytochrome P450 monooxygenase that is able to use dehydroabietic acid as a substrate for oxidation. The protein is Cytochrome P450 monooxygenase 79 of Postia placenta (strain ATCC 44394 / Madison 698-R) (Brown rot fungus).